Here is a 184-residue protein sequence, read N- to C-terminus: Protein CPn_0803/CP_1068/CPj0803/CpB0832 (184 aa).

The protein belongs to the chlamydial CPn_0803/CT_584/TC_0873 family.

The chain is Protein CPn_0803/CP_1068/CPj0803/CpB0832 from Chlamydia pneumoniae (Chlamydophila pneumoniae).